We begin with the raw amino-acid sequence, 436 residues long: Na(+)/H(+) antiporter NhaA (436 aa).

Helical transmembrane passes span 14–34 (AGGI…NSTW), 59–79 (LHHW…GLEL), 95–115 (ALPV…YHQF), 125–145 (WGIP…LLAW), 152–172 (IIFL…VIAI), 176–196 (PALH…LLLF), 214–234 (FWYF…FLAF), 300–320 (AIQP…NAGI), 336–356 (IGTC…SSWL), 374–394 (LLGA…IGQL), and 407–427 (LGIL…LFQV).

It belongs to the NhaA Na(+)/H(+) (TC 2.A.33) antiporter family.

The protein localises to the cell inner membrane. It carries out the reaction Na(+)(in) + 2 H(+)(out) = Na(+)(out) + 2 H(+)(in). Its function is as follows. Na(+)/H(+) antiporter that extrudes sodium in exchange for external protons. This chain is Na(+)/H(+) antiporter NhaA, found in Acidithiobacillus ferrooxidans (strain ATCC 23270 / DSM 14882 / CIP 104768 / NCIMB 8455) (Ferrobacillus ferrooxidans (strain ATCC 23270)).